A 79-amino-acid polypeptide reads, in one-letter code: Conotoxin ArMSGL-0122 (79 aa).

The N-terminal stretch at methionine 1–serine 20 is a signal peptide. Residues histidine 21 to threonine 44 constitute a propeptide that is removed on maturation. Intrachain disulfides connect cysteine 52/cysteine 64, cysteine 56/cysteine 73, and cysteine 63/cysteine 77. Leucine amide is present on leucine 78.

Belongs to the conotoxin O3 superfamily. In terms of tissue distribution, expressed by the venom duct.

It is found in the secreted. In Conus arenatus (Sand-dusted cone), this protein is Conotoxin ArMSGL-0122.